The primary structure comprises 303 residues: uncharacterized protein (303 aa).

Its subcellular location is the cytoplasm. This is an uncharacterized protein from Saccharomyces cerevisiae (strain ATCC 204508 / S288c) (Baker's yeast).